Reading from the N-terminus, the 693-residue chain is Elongation factor G (693 aa).

The 275-residue stretch at 9-283 (ERVRNIGIIA…AVCDYLPSPV (275 aa)) folds into the tr-type G domain. GTP-binding positions include 18–25 (AHIDAGKT), 82–86 (DTPGH), and 136–139 (NKMD).

Belongs to the TRAFAC class translation factor GTPase superfamily. Classic translation factor GTPase family. EF-G/EF-2 subfamily.

It is found in the cytoplasm. Catalyzes the GTP-dependent ribosomal translocation step during translation elongation. During this step, the ribosome changes from the pre-translocational (PRE) to the post-translocational (POST) state as the newly formed A-site-bound peptidyl-tRNA and P-site-bound deacylated tRNA move to the P and E sites, respectively. Catalyzes the coordinated movement of the two tRNA molecules, the mRNA and conformational changes in the ribosome. The protein is Elongation factor G of Dehalococcoides mccartyi (strain ATCC BAA-2266 / KCTC 15142 / 195) (Dehalococcoides ethenogenes (strain 195)).